Here is a 683-residue protein sequence, read N- to C-terminus: MLDKMRNIGIMAHIDAGKTTTTERILFYTGKIHKIGEIDDGQATMDWMAQEQDRGITIQSAATTTYWKNFQINIIDTPGHVDFTAEVERSLRVLDGAVAVLCAVGGVQPQTETVWHQADRYKVPRICFVNKMDRIGADFFAVLKDVHEKFGVEVMPVQIPIGASDSFEGVIDLIAMKEIHWDAATEGEKYEYTAIAQERLALAEEWREKMLDTISSASDEITELILEGKDVPEELIKKEIRKAVLNQSYIPFLCGSARKNIGVQPLIDAVVDFLPAPNEVLPAEAFNPKKEEKLSVPCKAEGAPLGLVFKIQYDKDAGSLCYVRMYSGKIKSGDQVFNTGKKKRERVNRILRMHSNKSEQMDSVQAGDIAVFIGLKISQTGDTLGSEGQPLLLESMQFPEPVISVSVEPKSLSESDRLKEVLEILSKEDPTFTSREDSETGQLIISGMGELHIDVLTRRMLDDFKVEARVGNPQVTYRESITTEKTQTEKYSKQLGGKDNEAELTLTVRPLERGSGNRFVSKVKTFQKSGSGGTNALPEDLLEAVKRSIEGCFSSGIKVGYPCTDIEVELVSVKYNELTATPFAYEAAAAKCFDDACSAAAPVLLEPVMAVDIMSPKEFVGDAMSQITQRGGLISSMDSKASTDIVHAQAPMAKMFGFSTDLRSATQGRASFTMSFSHFEIKR.

In terms of domain architecture, tr-type G spans 3 to 278; sequence DKMRNIGIMA…AVVDFLPAPN (276 aa). Residues 12-19, 76-80, and 130-133 each bind GTP; these read AHIDAGKT, DTPGH, and NKMD.

Belongs to the TRAFAC class translation factor GTPase superfamily. Classic translation factor GTPase family. EF-G/EF-2 subfamily.

It localises to the cytoplasm. Its function is as follows. Catalyzes the GTP-dependent ribosomal translocation step during translation elongation. During this step, the ribosome changes from the pre-translocational (PRE) to the post-translocational (POST) state as the newly formed A-site-bound peptidyl-tRNA and P-site-bound deacylated tRNA move to the P and E sites, respectively. Catalyzes the coordinated movement of the two tRNA molecules, the mRNA and conformational changes in the ribosome. This Treponema denticola (strain ATCC 35405 / DSM 14222 / CIP 103919 / JCM 8153 / KCTC 15104) protein is Elongation factor G 1.